We begin with the raw amino-acid sequence, 156 residues long: Protein-export protein SecB (156 aa).

Belongs to the SecB family. In terms of assembly, homotetramer, a dimer of dimers. One homotetramer interacts with 1 SecA dimer.

The protein resides in the cytoplasm. In terms of biological role, one of the proteins required for the normal export of preproteins out of the cell cytoplasm. It is a molecular chaperone that binds to a subset of precursor proteins, maintaining them in a translocation-competent state. It also specifically binds to its receptor SecA. The chain is Protein-export protein SecB from Aliivibrio fischeri (strain ATCC 700601 / ES114) (Vibrio fischeri).